The primary structure comprises 469 residues: Small ribosomal subunit protein mS29 (469 aa).

Leucine 150 provides a ligand contact to ATP.

It belongs to the mitochondrion-specific ribosomal protein mS29 family. Component of the mitochondrial small ribosomal subunit (mt-SSU). Mature N.crassa 74S mitochondrial ribosomes consist of a small (37S) and a large (54S) subunit. The 37S small subunit contains a 16S ribosomal RNA (16S mt-rRNA) and 32 different proteins. The 54S large subunit contains a 23S rRNA (23S mt-rRNA) and 42 different proteins.

The protein resides in the mitochondrion. Its function is as follows. Component of the mitochondrial ribosome (mitoribosome), a dedicated translation machinery responsible for the synthesis of mitochondrial genome-encoded proteins, including at least some of the essential transmembrane subunits of the mitochondrial respiratory chain. The mitoribosomes are attached to the mitochondrial inner membrane and translation products are cotranslationally integrated into the membrane. The sequence is that of Small ribosomal subunit protein mS29 (rsm23) from Neurospora crassa (strain ATCC 24698 / 74-OR23-1A / CBS 708.71 / DSM 1257 / FGSC 987).